Consider the following 133-residue polypeptide: Small ribosomal subunit protein uS8c (133 aa).

Belongs to the universal ribosomal protein uS8 family. Part of the 30S ribosomal subunit.

The protein localises to the plastid. The protein resides in the chloroplast. In terms of biological role, one of the primary rRNA binding proteins, it binds directly to 16S rRNA central domain where it helps coordinate assembly of the platform of the 30S subunit. The polypeptide is Small ribosomal subunit protein uS8c (rps8) (Mesostigma viride (Green alga)).